Here is a 275-residue protein sequence, read N- to C-terminus: Large ribosomal subunit protein uL2c (275 aa).

The disordered stretch occupies residues 225–252 (MNPCDHPHGGGEGRSPIGRAKPVTPWGK).

This sequence belongs to the universal ribosomal protein uL2 family. As to quaternary structure, part of the 50S ribosomal subunit.

It is found in the plastid. Its subcellular location is the chloroplast. The polypeptide is Large ribosomal subunit protein uL2c (rpl2) (Guillardia theta (Cryptophyte)).